A 211-amino-acid polypeptide reads, in one-letter code: Endo-1,4-beta-xylanase 6 (211 aa).

Positions 1–16 (MKVTAAFAGLLVTALA) are cleaved as a signal peptide. A GH11 domain is found at 19-210 (APEPVLVSRS…GAGSASVTIS (192 aa)). Catalysis depends on Glu106, which acts as the Nucleophile. Glu197 acts as the Proton donor in catalysis.

The protein belongs to the glycosyl hydrolase 11 (cellulase G) family.

It is found in the secreted. It catalyses the reaction Endohydrolysis of (1-&gt;4)-beta-D-xylosidic linkages in xylans.. It functions in the pathway glycan degradation; xylan degradation. Endo-1,4-beta-xylanase involved in the hydrolysis of xylan, a major structural heterogeneous polysaccharide found in plant biomass representing the second most abundant polysaccharide in the biosphere, after cellulose. This Aspergillus niger protein is Endo-1,4-beta-xylanase 6 (XYN6).